Reading from the N-terminus, the 83-residue chain is Cytochrome b559 subunit alpha (83 aa).

The chain crosses the membrane as a helical span at residues 21-35 (VIHSITIPSLFIAGW). Residue histidine 23 coordinates heme.

It belongs to the PsbE/PsbF family. As to quaternary structure, heterodimer of an alpha subunit and a beta subunit. PSII is composed of 1 copy each of membrane proteins PsbA, PsbB, PsbC, PsbD, PsbE, PsbF, PsbH, PsbI, PsbJ, PsbK, PsbL, PsbM, PsbT, PsbX, PsbY, PsbZ, Psb30/Ycf12, at least 3 peripheral proteins of the oxygen-evolving complex and a large number of cofactors. It forms dimeric complexes. Requires heme b as cofactor.

Its subcellular location is the plastid. It localises to the chloroplast thylakoid membrane. Its function is as follows. This b-type cytochrome is tightly associated with the reaction center of photosystem II (PSII). PSII is a light-driven water:plastoquinone oxidoreductase that uses light energy to abstract electrons from H(2)O, generating O(2) and a proton gradient subsequently used for ATP formation. It consists of a core antenna complex that captures photons, and an electron transfer chain that converts photonic excitation into a charge separation. This Citrus sinensis (Sweet orange) protein is Cytochrome b559 subunit alpha.